Reading from the N-terminus, the 359-residue chain is 3-dehydroquinate synthase (359 aa).

NAD(+) contacts are provided by residues 70–75, 105–109, 129–130, Lys142, Lys151, and 169–172; these read DGEQYK, GVIGD, TT, and FYKT. The Zn(2+) site is built by Glu184, His247, and His264.

It belongs to the sugar phosphate cyclases superfamily. Dehydroquinate synthase family. The cofactor is Co(2+). Zn(2+) is required as a cofactor. Requires NAD(+) as cofactor.

Its subcellular location is the cytoplasm. The catalysed reaction is 7-phospho-2-dehydro-3-deoxy-D-arabino-heptonate = 3-dehydroquinate + phosphate. It participates in metabolic intermediate biosynthesis; chorismate biosynthesis; chorismate from D-erythrose 4-phosphate and phosphoenolpyruvate: step 2/7. In terms of biological role, catalyzes the conversion of 3-deoxy-D-arabino-heptulosonate 7-phosphate (DAHP) to dehydroquinate (DHQ). This Francisella tularensis subsp. holarctica (strain OSU18) protein is 3-dehydroquinate synthase.